Here is a 448-residue protein sequence, read N- to C-terminus: Histidine--tRNA ligase (448 aa).

The protein belongs to the class-II aminoacyl-tRNA synthetase family. Homodimer.

It is found in the cytoplasm. The catalysed reaction is tRNA(His) + L-histidine + ATP = L-histidyl-tRNA(His) + AMP + diphosphate + H(+). The chain is Histidine--tRNA ligase from Treponema denticola (strain ATCC 35405 / DSM 14222 / CIP 103919 / JCM 8153 / KCTC 15104).